A 337-amino-acid chain; its full sequence is Holliday junction branch migration complex subunit RuvB (337 aa).

A large ATPase domain (RuvB-L) region spans residues 4 to 184 (ADRLIQPQVL…FGIPLRLEFY (181 aa)). ATP contacts are provided by residues Arg-24, Gly-65, Lys-68, Thr-69, Thr-70, 131–133 (EDY), Arg-174, Tyr-184, and Arg-221. Thr-69 lines the Mg(2+) pocket. Positions 185 to 255 (NVKDLCTIVT…VAQQALDMLD (71 aa)) are small ATPAse domain (RuvB-S). Residues 258-337 (QEGFDYLDRK…FNIITPDVPK (80 aa)) are head domain (RuvB-H). DNA-binding residues include Arg-294, Arg-313, and Arg-318.

This sequence belongs to the RuvB family. In terms of assembly, homohexamer. Forms an RuvA(8)-RuvB(12)-Holliday junction (HJ) complex. HJ DNA is sandwiched between 2 RuvA tetramers; dsDNA enters through RuvA and exits via RuvB. An RuvB hexamer assembles on each DNA strand where it exits the tetramer. Each RuvB hexamer is contacted by two RuvA subunits (via domain III) on 2 adjacent RuvB subunits; this complex drives branch migration. In the full resolvosome a probable DNA-RuvA(4)-RuvB(12)-RuvC(2) complex forms which resolves the HJ.

The protein resides in the cytoplasm. It catalyses the reaction ATP + H2O = ADP + phosphate + H(+). Its function is as follows. The RuvA-RuvB-RuvC complex processes Holliday junction (HJ) DNA during genetic recombination and DNA repair, while the RuvA-RuvB complex plays an important role in the rescue of blocked DNA replication forks via replication fork reversal (RFR). RuvA specifically binds to HJ cruciform DNA, conferring on it an open structure. The RuvB hexamer acts as an ATP-dependent pump, pulling dsDNA into and through the RuvAB complex. RuvB forms 2 homohexamers on either side of HJ DNA bound by 1 or 2 RuvA tetramers; 4 subunits per hexamer contact DNA at a time. Coordinated motions by a converter formed by DNA-disengaged RuvB subunits stimulates ATP hydrolysis and nucleotide exchange. Immobilization of the converter enables RuvB to convert the ATP-contained energy into a lever motion, pulling 2 nucleotides of DNA out of the RuvA tetramer per ATP hydrolyzed, thus driving DNA branch migration. The RuvB motors rotate together with the DNA substrate, which together with the progressing nucleotide cycle form the mechanistic basis for DNA recombination by continuous HJ branch migration. Branch migration allows RuvC to scan DNA until it finds its consensus sequence, where it cleaves and resolves cruciform DNA. The polypeptide is Holliday junction branch migration complex subunit RuvB (Shewanella denitrificans (strain OS217 / ATCC BAA-1090 / DSM 15013)).